The chain runs to 113 residues: Vitelline membrane protein Vm32E (113 aa).

An N-terminal signal peptide occupies residues 1 to 17; that stretch reads MKIVAFTLVAFVALAGA. One can recognise a VM domain in the interval 33–70; sequence GYPAPPCPTNYLFSCQPNLAPVPCAQQAPAYGSAGAYT.

This sequence belongs to the vitelline membrane family.

Its subcellular location is the secreted. Its function is as follows. Major early eggshell protein. In Drosophila erecta (Fruit fly), this protein is Vitelline membrane protein Vm32E.